Here is a 116-residue protein sequence, read N- to C-terminus: Large ribosomal subunit protein bL17 (116 aa).

It belongs to the bacterial ribosomal protein bL17 family. In terms of assembly, part of the 50S ribosomal subunit. Contacts protein L32.

This Helicobacter pylori (strain J99 / ATCC 700824) (Campylobacter pylori J99) protein is Large ribosomal subunit protein bL17.